The chain runs to 341 residues: Tetraacyldisaccharide 4'-kinase (341 aa).

Residue T54–T61 coordinates ATP.

The protein belongs to the LpxK family.

It carries out the reaction a lipid A disaccharide + ATP = a lipid IVA + ADP + H(+). It participates in glycolipid biosynthesis; lipid IV(A) biosynthesis; lipid IV(A) from (3R)-3-hydroxytetradecanoyl-[acyl-carrier-protein] and UDP-N-acetyl-alpha-D-glucosamine: step 6/6. Its function is as follows. Transfers the gamma-phosphate of ATP to the 4'-position of a tetraacyldisaccharide 1-phosphate intermediate (termed DS-1-P) to form tetraacyldisaccharide 1,4'-bis-phosphate (lipid IVA). The chain is Tetraacyldisaccharide 4'-kinase from Brucella anthropi (strain ATCC 49188 / DSM 6882 / CCUG 24695 / JCM 21032 / LMG 3331 / NBRC 15819 / NCTC 12168 / Alc 37) (Ochrobactrum anthropi).